The following is a 156-amino-acid chain: UPF0756 membrane protein Exig_2210 (156 aa).

The next 5 helical transmembrane spans lie at 5–25 (LFLIGLVLIGVIAQNKSLIIA), 52–72 (WGVTLITAAILVPIATGDIGF), 83–103 (IGIISFLAGIFVAIIAAHGVG), 109–129 (PLVTTALLAGTILAVGLFRGV), and 131–151 (VGPLIGAGIAALVIGMWDIIV).

This sequence belongs to the UPF0756 family.

It localises to the cell membrane. This chain is UPF0756 membrane protein Exig_2210, found in Exiguobacterium sibiricum (strain DSM 17290 / CCUG 55495 / CIP 109462 / JCM 13490 / 255-15).